A 351-amino-acid chain; its full sequence is Methionine import ATP-binding protein MetN (351 aa).

In terms of domain architecture, ABC transporter spans 4-249 (VQLDHVSVTF…PKAELTQKFV (246 aa)). An ATP-binding site is contributed by 41-48 (GFSGAGKS).

The protein belongs to the ABC transporter superfamily. Methionine importer (TC 3.A.1.24) family. In terms of assembly, the complex is composed of two ATP-binding proteins (MetN), two transmembrane proteins (MetI) and a solute-binding protein (MetQ).

The protein localises to the cell membrane. The catalysed reaction is L-methionine(out) + ATP + H2O = L-methionine(in) + ADP + phosphate + H(+). It carries out the reaction D-methionine(out) + ATP + H2O = D-methionine(in) + ADP + phosphate + H(+). Functionally, part of the ABC transporter complex MetNIQ involved in methionine import. Responsible for energy coupling to the transport system. The chain is Methionine import ATP-binding protein MetN from Lactobacillus delbrueckii subsp. bulgaricus (strain ATCC 11842 / DSM 20081 / BCRC 10696 / JCM 1002 / NBRC 13953 / NCIMB 11778 / NCTC 12712 / WDCM 00102 / Lb 14).